A 596-amino-acid chain; its full sequence is Dihydroxy-acid dehydratase pbrD, mitochondrial (596 aa).

The N-terminal 18 residues, 1-18 (MATSSIRSRALGLSRRAR), are a transit peptide targeting the mitochondrion. Residue cysteine 84 participates in [2Fe-2S] cluster binding. A Mg(2+)-binding site is contributed by aspartate 116. A [2Fe-2S] cluster-binding site is contributed by cysteine 157. Aspartate 158 provides a ligand contact to Mg(2+). Cysteine 230 is a binding site for [2Fe-2S] cluster. Glutamate 483 is a binding site for Mg(2+). Catalysis depends on serine 509, which acts as the Proton acceptor.

It belongs to the IlvD/Edd family. The cofactor is [2Fe-2S] cluster. Mg(2+) serves as cofactor.

The protein localises to the mitochondrion. It catalyses the reaction (2R)-2,3-dihydroxy-3-methylbutanoate = 3-methyl-2-oxobutanoate + H2O. The catalysed reaction is (2R,3R)-2,3-dihydroxy-3-methylpentanoate = (S)-3-methyl-2-oxopentanoate + H2O. The protein operates within amino-acid biosynthesis; L-isoleucine biosynthesis; L-isoleucine from 2-oxobutanoate: step 3/4. It participates in amino-acid biosynthesis; L-valine biosynthesis; L-valine from pyruvate: step 3/4. With respect to regulation, DHAD activity is not inhibited by the dihydroxyacid dehydratase inhibitor aspterric acid (AA). Functionally, dihydroxyacid dehydratase; part of the gene cluster that mediates the biosynthesis of the sesquiterpenoid aspterric acid (AA), an inhibitor of dihydroxy-acid dehydratase (DHAD) effective as an herbicide. Performs the third step in the common pathway leading to biosynthesis of branched-chain amino acids. Catalyzes the dehydration of (2R,3R)-2,3-dihydroxy-3-methylpentanoate (2,3-dihydroxy-3-methylvalerate) into 2-oxo-3-methylpentanoate (2-oxo-3-methylvalerate) and of (2R)-2,3-dihydroxy-3-methylbutanoate (2,3-dihydroxyisovalerate) into 2-oxo-3-methylbutanoate (2-oxoisovalerate), the penultimate precursor to L-isoleucine and L-valine, respectively. PbrD confers self-resistance in the presence of the dihydroxyacid dehydratase inhibitor aspterric acid (AA) produced by the ast cluster. In Penicillium brasilianum, this protein is Dihydroxy-acid dehydratase pbrD, mitochondrial.